The sequence spans 293 residues: 4-hydroxy-tetrahydrodipicolinate synthase (293 aa).

Pyruvate is bound at residue Thr-47. The active-site Proton donor/acceptor is Tyr-135. The active-site Schiff-base intermediate with substrate is Lys-164. Position 206 (Ile-206) interacts with pyruvate.

Belongs to the DapA family. In terms of assembly, homotetramer; dimer of dimers.

The protein localises to the cytoplasm. It carries out the reaction L-aspartate 4-semialdehyde + pyruvate = (2S,4S)-4-hydroxy-2,3,4,5-tetrahydrodipicolinate + H2O + H(+). It participates in amino-acid biosynthesis; L-lysine biosynthesis via DAP pathway; (S)-tetrahydrodipicolinate from L-aspartate: step 3/4. Functionally, catalyzes the condensation of (S)-aspartate-beta-semialdehyde [(S)-ASA] and pyruvate to 4-hydroxy-tetrahydrodipicolinate (HTPA). This Flavobacterium psychrophilum (strain ATCC 49511 / DSM 21280 / CIP 103535 / JIP02/86) protein is 4-hydroxy-tetrahydrodipicolinate synthase.